The following is a 210-amino-acid chain: Protein SgcE (210 aa).

Residue S6 participates in substrate binding. The a divalent metal cation site is built by H31, D33, and H64. D33 acts as the Proton acceptor in catalysis. Substrate contacts are provided by residues H64, 140 to 143, 169 to 171, and 191 to 192; these read DGQG, DGG, and GR. An a divalent metal cation-binding site is contributed by D169. D169 (proton donor) is an active-site residue.

It belongs to the ribulose-phosphate 3-epimerase family. Co(2+) is required as a cofactor. The cofactor is Fe(2+). It depends on Mn(2+) as a cofactor. Zn(2+) serves as cofactor.

The protein operates within carbohydrate degradation. In terms of biological role, probable pentose-5-phosphate 3-epimerase. The chain is Protein SgcE (sgcE) from Escherichia coli (strain K12).